Here is a 530-residue protein sequence, read N- to C-terminus: Bifunctional purine biosynthesis protein PurH (530 aa).

The MGS-like domain maps to 1 to 148 (MNNARPIRRA…KNHKDVTIVV (148 aa)).

It belongs to the PurH family.

The enzyme catalyses (6R)-10-formyltetrahydrofolate + 5-amino-1-(5-phospho-beta-D-ribosyl)imidazole-4-carboxamide = 5-formamido-1-(5-phospho-D-ribosyl)imidazole-4-carboxamide + (6S)-5,6,7,8-tetrahydrofolate. It catalyses the reaction IMP + H2O = 5-formamido-1-(5-phospho-D-ribosyl)imidazole-4-carboxamide. It functions in the pathway purine metabolism; IMP biosynthesis via de novo pathway; 5-formamido-1-(5-phospho-D-ribosyl)imidazole-4-carboxamide from 5-amino-1-(5-phospho-D-ribosyl)imidazole-4-carboxamide (10-formyl THF route): step 1/1. Its pathway is purine metabolism; IMP biosynthesis via de novo pathway; IMP from 5-formamido-1-(5-phospho-D-ribosyl)imidazole-4-carboxamide: step 1/1. This chain is Bifunctional purine biosynthesis protein PurH, found in Aliivibrio fischeri (strain ATCC 700601 / ES114) (Vibrio fischeri).